The following is a 350-amino-acid chain: Heat-inducible transcription repressor HrcA (350 aa).

This sequence belongs to the HrcA family.

In terms of biological role, negative regulator of class I heat shock genes (grpE-dnaK-dnaJ and groELS operons). Prevents heat-shock induction of these operons. The polypeptide is Heat-inducible transcription repressor HrcA (Xanthomonas euvesicatoria pv. vesicatoria (strain 85-10) (Xanthomonas campestris pv. vesicatoria)).